A 1213-amino-acid chain; its full sequence is Genetic suppressor element 1 (1213 aa).

Positions 1–154 are disordered; the sequence is MKGMSHEPKS…GSRGSSSGRE (154 aa). Serine 10 is subject to Phosphoserine. Positions 15–33 are enriched in polar residues; that stretch reads MLSTATRTTATVNPLTPSP. Low complexity-rich tracts occupy residues 51-63 and 76-89; these read SAQAAPSSSFAAA and GSSLSSESSPVSSP. Phosphoserine occurs at positions 84 and 95. A compositionally biased stretch (low complexity) spans 103–114; it reads VPMGPIIVPPGG. Position 305 is an asymmetric dimethylarginine (arginine 305). Residues 319 to 402 are a coiled coil; the sequence is HSERMSSLSA…REKELLAAKA (84 aa). The tract at residues 326–384 is disordered; it reads LSAERLQMDEELRREREREREREREADREREKEREREQREKEREKELEREREKEREREL. Basic and acidic residues predominate over residues 331–384; the sequence is LQMDEELRREREREREREREADREREKEREREQREKEREKELEREREKEREREL. Threonine 433 carries the phosphothreonine modification. Lysine 496 bears the N6-acetyllysine mark. Disordered regions lie at residues 527 to 579 and 630 to 719; these read LDLG…QHTV and SEKA…TARG. Basic and acidic residues-rich tracts occupy residues 537-560 and 630-643; these read EAEHRPESTRPGTNRHEQGSREPP and SEKAEEPRKREATP. A compositionally biased stretch (pro residues) spans 648 to 657; sequence QPPPPPPPPR. Residues 681 to 700 are compositionally biased toward polar residues; that stretch reads STQTILGQQRPSLSQATSFG. Residue lysine 739 is modified to N6-acetyllysine. A phosphoserine mark is found at serine 766, serine 826, serine 828, and serine 857. Disordered stretches follow at residues 816–858, 898–979, and 1065–1118; these read RKRR…NNSP, LSAA…EAPG, and ELQS…PRRQ. Over residues 847–858 the composition is skewed to polar residues; sequence TRYSPDEMNNSP. Threonine 905 carries the phosphothreonine modification. Serine 907 is subject to Phosphoserine. The segment covering 1065 to 1081 has biased composition (polar residues); that stretch reads ELQSSSRVPLPQHNGQQ. Residues 1093–1197 adopt a coiled-coil conformation; that stretch reads QEADQDSEED…ELDHLRKCLA (105 aa). Over residues 1095-1112 the composition is skewed to acidic residues; that stretch reads ADQDSEEDSEEDSEEEAE. A Phosphoserine modification is found at serine 1099.

May be a component of a BHC histone deacetylase complex that contains HDAC1, HDAC2, HMG20B/BRAF35, KDM1A, RCOR1/CoREST, PHF21A/BHC80, ZMYM2, ZNF217, ZMYM3, GSE1 and GTF2I.

The sequence is that of Genetic suppressor element 1 (Gse1) from Mus musculus (Mouse).